The primary structure comprises 142 residues: Large ribosomal subunit protein uL13 (142 aa).

The protein belongs to the universal ribosomal protein uL13 family. Part of the 50S ribosomal subunit.

Functionally, this protein is one of the early assembly proteins of the 50S ribosomal subunit, although it is not seen to bind rRNA by itself. It is important during the early stages of 50S assembly. This Thioalkalivibrio sulfidiphilus (strain HL-EbGR7) protein is Large ribosomal subunit protein uL13.